A 281-amino-acid chain; its full sequence is 2-dehydro-3-deoxyphosphooctonate aldolase (281 aa).

It belongs to the KdsA family.

It localises to the cytoplasm. It catalyses the reaction D-arabinose 5-phosphate + phosphoenolpyruvate + H2O = 3-deoxy-alpha-D-manno-2-octulosonate-8-phosphate + phosphate. Its pathway is carbohydrate biosynthesis; 3-deoxy-D-manno-octulosonate biosynthesis; 3-deoxy-D-manno-octulosonate from D-ribulose 5-phosphate: step 2/3. The protein operates within bacterial outer membrane biogenesis; lipopolysaccharide biosynthesis. The chain is 2-dehydro-3-deoxyphosphooctonate aldolase from Pseudomonas putida (strain GB-1).